We begin with the raw amino-acid sequence, 469 residues long: MWKEKVQQYEDQIINDLKGLLAIESVRDDAKASEDAPVGPGPRKALDYMYEIAHRDGFTTHDVDHIAGRIEAGKGNDVLGILCHVDVVPAGDGWDSNPFEPVVTEDAIIARGTLDDKGPTIAAYYAIKILEDMNVDWKKRIHMIIGTDEESDWKCTDRYFKTEEMPTLGFAPDAEFPCIHGEKGITTFDLVQNKLTEDQDEPDYELITFKSGERYNMVPDHAEARVLVKENMTDVIQDFEYFLEQNHLQGDSTVDSGILVLTVEGKAVHGMDPSIGVNAGLYLLKFLASLNLDNNAQAFVAFSNRYLFNSDFGEKMGMKFHTDVMGDVTTNIGVITYDNENAGLFGINLRYPEGFEFEKAMDRFANEIQQYGFEVKLGKVQPPHYVDKNDPFVQKLVTAYRNQTNDMTEPYTIGGGTYARNLDKGVAFGAMFSDSEDLMHQKNEYITKKQLFNATSIYLEAIYSLCVEE.

Zn(2+) is bound at residue His84. Asp86 is a catalytic residue. Asp115 lines the Zn(2+) pocket. Glu149 functions as the Proton acceptor in the catalytic mechanism. Residues Glu150, Asp173, and His440 each contribute to the Zn(2+) site.

This sequence belongs to the peptidase M20A family. It depends on Zn(2+) as a cofactor.

The chain is Putative dipeptidase SAUSA300_1697 from Staphylococcus aureus (strain USA300).